Here is a 394-residue protein sequence, read N- to C-terminus: Serine palmitoyltransferase (394 aa).

Residues 111 to 112 (GF), Ser-183, His-211, and Thr-239 contribute to the pyridoxal 5'-phosphate site. Lys-242 carries the N6-(pyridoxal phosphate)lysine modification.

It belongs to the class-II pyridoxal-phosphate-dependent aminotransferase family. Requires pyridoxal 5'-phosphate as cofactor.

It catalyses the reaction L-serine + hexadecanoyl-CoA + H(+) = 3-oxosphinganine + CO2 + CoA. Its pathway is lipid metabolism; sphingolipid metabolism. Involved in de novo bacterial ceramide synthesis. Catalyzes the condensation of L-serine with palmitoyl-CoA (hexadecanoyl-CoA) to produce 3-oxosphinganine. Also capable of using alanine as substrate leading to the formation of 1-deoxysphinganine (1-deoxySa). Contributes to the levels of endogenous sphingolipids in its host. The polypeptide is Serine palmitoyltransferase (Bacteroides ovatus (strain ATCC 8483 / DSM 1896 / JCM 5824 / BCRC 10623 / CCUG 4943 / NCTC 11153)).